A 488-amino-acid chain; its full sequence is Tocopherol cyclase, chloroplastic (488 aa).

A chloroplast-targeting transit peptide spans 1–76 (MEIRSLIVSM…VPTSPNRELR (76 aa)).

It is found in the plastid. It localises to the chloroplast. The protein resides in the plastoglobule. It carries out the reaction delta-tocopherol = 2-methyl-6-phytyl-1,4-benzene-1,4-diol. It catalyses the reaction gamma-tocopherol = 2,3-dimethyl-6-phytylbenzene-1,4-diol. The catalysed reaction is delta-tocotrienol = 6-geranylgeranyl-2-methylbenzene-1,4-diol. The enzyme catalyses gamma-tocotrienol = 6-geranylgeranyl-2,3-dimethylbenzene-1,4-diol. The protein operates within cofactor biosynthesis; tocopherol biosynthesis. In terms of biological role, involved in the synthesis of both tocopherols and tocotrienols (vitamin E), which presumably protect photosynthetic complexes from oxidative stress. Catalyzes the conversion of 2-methyl-6-phytyl-1,4-hydroquinone and 2,3-dimethyl-5-phytyl-1,4-hydroquinone (DMPQ) to delta- and gamma-tocopherol respectively. Also converts 2,3-dimethyl-5-geranylgeranyl-1,4-hydroquinone (DMGQ) to gamma-tocotrienol. The polypeptide is Tocopherol cyclase, chloroplastic (VTE1) (Arabidopsis thaliana (Mouse-ear cress)).